The primary structure comprises 74 residues: MDAVQELEHRITELEIQSALQEDVIAGLNAMVAELRQTLDLQQAQLRLLYQKMQDRNPDAQEPYSLRDEIPPHY.

Belongs to the SlyX family.

In Neisseria meningitidis serogroup C / serotype 2a (strain ATCC 700532 / DSM 15464 / FAM18), this protein is Protein SlyX homolog.